Here is a 201-residue protein sequence, read N- to C-terminus: Molybdenum cofactor guanylyltransferase (201 aa).

Residues Leu-14–Gly-16, Lys-31, and Asp-104 contribute to the GTP site. Asp-104 contributes to the Mg(2+) binding site.

Belongs to the MobA family. Monomer. Mg(2+) serves as cofactor.

Its subcellular location is the cytoplasm. The catalysed reaction is Mo-molybdopterin + GTP + H(+) = Mo-molybdopterin guanine dinucleotide + diphosphate. In terms of biological role, transfers a GMP moiety from GTP to Mo-molybdopterin (Mo-MPT) cofactor (Moco or molybdenum cofactor) to form Mo-molybdopterin guanine dinucleotide (Mo-MGD) cofactor. The polypeptide is Molybdenum cofactor guanylyltransferase (Helicobacter pylori (strain G27)).